A 188-amino-acid chain; its full sequence is Elongation factor P (188 aa).

It belongs to the elongation factor P family.

The protein resides in the cytoplasm. Its pathway is protein biosynthesis; polypeptide chain elongation. In terms of biological role, involved in peptide bond synthesis. Stimulates efficient translation and peptide-bond synthesis on native or reconstituted 70S ribosomes in vitro. Probably functions indirectly by altering the affinity of the ribosome for aminoacyl-tRNA, thus increasing their reactivity as acceptors for peptidyl transferase. The sequence is that of Elongation factor P from Methylorubrum populi (strain ATCC BAA-705 / NCIMB 13946 / BJ001) (Methylobacterium populi).